Here is a 331-residue protein sequence, read N- to C-terminus: Biotin synthase (331 aa).

One can recognise a Radical SAM core domain in the interval 52–277; the sequence is PDVEVEGIIS…RTMLRFAGGR (226 aa). [4Fe-4S] cluster contacts are provided by Cys-67, Cys-71, and Cys-74. Residues Cys-110, Cys-143, Cys-202, and Arg-272 each coordinate [2Fe-2S] cluster.

The protein belongs to the radical SAM superfamily. Biotin synthase family. In terms of assembly, homodimer. It depends on [4Fe-4S] cluster as a cofactor. The cofactor is [2Fe-2S] cluster.

It carries out the reaction (4R,5S)-dethiobiotin + (sulfur carrier)-SH + 2 reduced [2Fe-2S]-[ferredoxin] + 2 S-adenosyl-L-methionine = (sulfur carrier)-H + biotin + 2 5'-deoxyadenosine + 2 L-methionine + 2 oxidized [2Fe-2S]-[ferredoxin]. Its pathway is cofactor biosynthesis; biotin biosynthesis; biotin from 7,8-diaminononanoate: step 2/2. Catalyzes the conversion of dethiobiotin (DTB) to biotin by the insertion of a sulfur atom into dethiobiotin via a radical-based mechanism. The sequence is that of Biotin synthase from Mycobacterium sp. (strain JLS).